An 87-amino-acid chain; its full sequence is Probable Fe(2+)-trafficking protein (87 aa).

This sequence belongs to the Fe(2+)-trafficking protein family.

In terms of biological role, could be a mediator in iron transactions between iron acquisition and iron-requiring processes, such as synthesis and/or repair of Fe-S clusters in biosynthetic enzymes. This Francisella tularensis subsp. novicida (strain U112) protein is Probable Fe(2+)-trafficking protein.